Here is a 138-residue protein sequence, read N- to C-terminus: Large ribosomal subunit protein uL16 (138 aa).

This sequence belongs to the universal ribosomal protein uL16 family. In terms of assembly, part of the 50S ribosomal subunit.

Binds 23S rRNA and is also seen to make contacts with the A and possibly P site tRNAs. The polypeptide is Large ribosomal subunit protein uL16 (Gluconacetobacter diazotrophicus (strain ATCC 49037 / DSM 5601 / CCUG 37298 / CIP 103539 / LMG 7603 / PAl5)).